The following is a 209-amino-acid chain: MNGWNFQELKETPSQTGGPYVHIGLLPKQANIEVFEHNLDNNLVQDNTQGQRIRLEGQVFDGLGLPLRDVLIEIWQADTNGVYPSQADTQGKQVDPNFLGWGRTGADFGTGFWSFNTIKPGAVPGRKGSTQAPHISLIIFARGINIGLHTRVYFDDEAEANAKDPVLNSIEWATRRQTLVAKREERDGEVVYRFDIRIQGENETVFFDI.

Arginine 142 lines the 3,4-dihydroxybenzoate pocket.

Belongs to the intradiol ring-cleavage dioxygenase family. The enzyme is an oligomer of 12 copies of the alpha and beta chains. Requires Fe(3+) as cofactor.

The enzyme catalyses 3,4-dihydroxybenzoate + O2 = 3-carboxy-cis,cis-muconate + 2 H(+). It functions in the pathway aromatic compound metabolism; beta-ketoadipate pathway; 3-carboxy-cis,cis-muconate from 3,4-dihydroxybenzoate: step 1/1. In terms of biological role, plays an essential role in the utilization of numerous aromatic and hydroaromatic compounds via the beta-ketoadipate pathway. The sequence is that of Protocatechuate 3,4-dioxygenase alpha chain (pcaG) from Acinetobacter baylyi (strain ATCC 33305 / BD413 / ADP1).